The sequence spans 111 residues: uncharacterized protein (111 aa).

It localises to the cytoplasm. It is found in the nucleus. This is an uncharacterized protein from Schizosaccharomyces pombe (strain 972 / ATCC 24843) (Fission yeast).